We begin with the raw amino-acid sequence, 353 residues long: uncharacterized protein (353 aa).

A signal peptide spans 1–30; sequence MHLRHLFSSRLRGSLLLGSLLVVSSFSTQA.

In terms of assembly, monomer.

This is an uncharacterized protein from Escherichia coli (strain K12).